Consider the following 363-residue polypeptide: MNKLALYCRPGFEKEVAAEITDQASHLGVFGFARVQDNSGYVIFECYQPDEADRLARDIPFNRLIFARQMMVISDLLEDLDPADRISPIVVAFEELSQQVNFAQSSELFVETADTNEAKELSTFCRKFTVPLRQALKKQGWLSAKASQKCGQFLHCFFVKPNCCYVGYSYVDNHSSHFMGIPRLKFPADAPSRSTLKLEEAILTFIPRKEENKRLNENMIGVDLGACPGGWTYQLVKRGLFVYAVDHGKMAASLHDTGRIEHCAEDGFKFQPPKRKKVDWLVCDMVEQPSRISLLIGKWLLNGWCRETIFNLKLPMKKRYQEVILCLENLAVMLAEQNLNFDIQAKHLYHDREEITVHIALKP.

S-adenosyl-L-methionine is bound by residues Ser194, 227-230 (CPGG), Asp246, Asp266, and Asp284. Lys313 acts as the Proton acceptor in catalysis.

This sequence belongs to the class I-like SAM-binding methyltransferase superfamily. RNA methyltransferase RlmE family. RlmM subfamily. Monomer.

It localises to the cytoplasm. It catalyses the reaction cytidine(2498) in 23S rRNA + S-adenosyl-L-methionine = 2'-O-methylcytidine(2498) in 23S rRNA + S-adenosyl-L-homocysteine + H(+). Functionally, catalyzes the 2'-O-methylation at nucleotide C2498 in 23S rRNA. This Haemophilus influenzae (strain ATCC 51907 / DSM 11121 / KW20 / Rd) protein is Ribosomal RNA large subunit methyltransferase M.